Reading from the N-terminus, the 561-residue chain is Phosphatidylinositol 4-kinase gamma 1 (561 aa).

The region spanning 121-416 (GAQPLLLPSG…SVFGKTSEDS (296 aa)) is the PI3K/PI4K catalytic domain. Residues 127–133 (LPSGMGG) form a G-loop region. ATP-binding positions include 128–134 (PSGMGGA), Lys-149, and 233–236 (QRFV). The tract at residues 266 to 274 (LNLDRHAGN) is catalytic loop. Positions 296 to 322 (PIDHGLCLPECLDDPYFEWLNWPQALV) are activation loop. Asp-298 contacts ATP. Residues 456–520 (PPLVPRGPRA…PISPNHDESK (65 aa)) form a disordered region. Residues 467 to 484 (TIPNDVTASMSSSQNQRI) show a composition bias toward polar residues.

Belongs to the PI3/PI4-kinase family. Type II PI4K subfamily.

It carries out the reaction a 1,2-diacyl-sn-glycero-3-phospho-(1D-myo-inositol) + ATP = a 1,2-diacyl-sn-glycero-3-phospho-(1D-myo-inositol 4-phosphate) + ADP + H(+). Its function is as follows. The phosphorylation of phosphatidylinositol (PI) to PI4P is the first committed step in the generation of phosphatidylinositol 4,5-bisphosphate (PIP2), a precursor of the second messenger inositol 1,4,5-trisphosphate (InsP3). This chain is Phosphatidylinositol 4-kinase gamma 1 (PI4KG1), found in Arabidopsis thaliana (Mouse-ear cress).